The primary structure comprises 620 residues: Ferric/cupric reductase transmembrane component 7 (620 aa).

Over 1 to 45 (MIEERDLVLSNGIHCIADIHSELYARLKKESQAVTPWVYQKQYGK) the chain is Extracellular. The chain crosses the membrane as a helical span at residues 46–66 (FVTYFVAVIIFLSLIKKLAFM). Residues 67-107 (YYDSSEEFLPEKKNSPTTPSVFLARIMTKLVAFNRYICYRK) are Cytoplasmic-facing. Residues 108 to 128 (FPTLIFSYLGIPTSVGTFLVV) form a helical membrane-spanning segment. Over 129 to 167 (MATTLYTLLYCFVPHPFYRPCAGFGSPPLSVRAGIMAIS) the chain is Extracellular. The Ferric oxidoreductase domain maps to 161 to 320 (AGIMAISLVS…LAVKGYLRPG (160 aa)). Residues 168–188 (LVSFVFSLSGKINVIGWLVGL) form a helical membrane-spanning segment. The Cytoplasmic segment spans residues 189 to 194 (SYEKIN). Residues 195-215 (IYHQWASILCLFFSWVHVIPF) form a helical membrane-spanning segment. 2 residues coordinate heme: His197 and His211. Topologically, residues 216-237 (LRQARHEGGYERMHQRWKASDM) are extracellular. The helical transmembrane segment at 238–258 (WRSGVPPILFLNLLWLSSLPI) threads the bilayer. Residues 259–265 (ARRHFYE) are Cytoplasmic-facing. A helical membrane pass occupies residues 266–286 (IFLQLHWILAVGFYISLFYHV). Residues His271 and His285 each coordinate heme. At 287-292 (YPELNS) the chain is on the extracellular side. Residues 293–313 (HMYLVATIVVWFAQLFYRLAV) form a helical membrane-spanning segment. Topologically, residues 314 to 620 (KGYLRPGRSF…CYLHSESFGY (307 aa)) are cytoplasmic. An FAD-binding FR-type domain is found at 321–419 (RSFMASTIAN…DGPYGGIERD (99 aa)). Position 369–375 (369–375 (HPFSIFP)) interacts with FAD. Positions 519–544 (SDQSDLAKREKDTEFGQDDTESNSTF) are disordered. Basic and acidic residues predominate over residues 523–532 (DLAKREKDTE).

The protein belongs to the ferric reductase (FRE) family. Requires FAD as cofactor.

The protein localises to the cell membrane. The catalysed reaction is 2 a Fe(II)-siderophore + NADP(+) + H(+) = 2 a Fe(III)-siderophore + NADPH. Cell surface metalloreductase. May be involved in copper homeostasis. The chain is Ferric/cupric reductase transmembrane component 7 (FRE7) from Saccharomyces cerevisiae (strain YJM789) (Baker's yeast).